The following is a 20-amino-acid chain: Unknown protein NF042 from 2D-PAGE (20 aa).

This Naegleria fowleri (Brain eating amoeba) protein is Unknown protein NF042 from 2D-PAGE.